The chain runs to 198 residues: NADH-quinone oxidoreductase subunit C (198 aa).

This sequence belongs to the complex I 30 kDa subunit family. As to quaternary structure, NDH-1 is composed of 14 different subunits. Subunits NuoB, C, D, E, F, and G constitute the peripheral sector of the complex.

Its subcellular location is the cell inner membrane. It carries out the reaction a quinone + NADH + 5 H(+)(in) = a quinol + NAD(+) + 4 H(+)(out). Its function is as follows. NDH-1 shuttles electrons from NADH, via FMN and iron-sulfur (Fe-S) centers, to quinones in the respiratory chain. The immediate electron acceptor for the enzyme in this species is believed to be ubiquinone. Couples the redox reaction to proton translocation (for every two electrons transferred, four hydrogen ions are translocated across the cytoplasmic membrane), and thus conserves the redox energy in a proton gradient. In Herminiimonas arsenicoxydans, this protein is NADH-quinone oxidoreductase subunit C.